The primary structure comprises 93 residues: Small ribosomal subunit protein uS19 (93 aa).

Positions 72-93 (GEFSPTRTYRGHNKKDKKMQKK) are disordered. The segment covering 80–93 (YRGHNKKDKKMQKK) has biased composition (basic residues).

It belongs to the universal ribosomal protein uS19 family.

Its function is as follows. Protein S19 forms a complex with S13 that binds strongly to the 16S ribosomal RNA. In Aster yellows witches'-broom phytoplasma (strain AYWB), this protein is Small ribosomal subunit protein uS19.